The chain runs to 181 residues: Translation initiation factor IF-3 (181 aa).

Belongs to the IF-3 family. Monomer.

It is found in the cytoplasm. Functionally, IF-3 binds to the 30S ribosomal subunit and shifts the equilibrium between 70S ribosomes and their 50S and 30S subunits in favor of the free subunits, thus enhancing the availability of 30S subunits on which protein synthesis initiation begins. This Mycoplasma capricolum subsp. capricolum (strain California kid / ATCC 27343 / NCTC 10154) protein is Translation initiation factor IF-3.